Consider the following 592-residue polypeptide: Probable oxidoreductase EphD (592 aa).

Positions 30–286 constitute an AB hydrolase-1 domain; it reads PTVVLVHGFP…KAGHFSPMSH (257 aa). Position 461 (serine 461) interacts with substrate. The Proton acceptor role is filled by tyrosine 474.

Belongs to the short-chain dehydrogenases/reductases (SDR) family.

This chain is Probable oxidoreductase EphD (ephD), found in Mycobacterium bovis (strain ATCC BAA-935 / AF2122/97).